We begin with the raw amino-acid sequence, 727 residues long: Elongation factor 2 (727 aa).

Residues 19–260 (EQIRNMGICA…MSIKHLPNPL (242 aa)) enclose the tr-type G domain. Residues 28–35 (AHIDHGKT), 94–98 (DTPGH), and 148–151 (NKVD) contribute to the GTP site. His-603 carries the post-translational modification Diphthamide.

It belongs to the TRAFAC class translation factor GTPase superfamily. Classic translation factor GTPase family. EF-G/EF-2 subfamily.

Its subcellular location is the cytoplasm. Catalyzes the GTP-dependent ribosomal translocation step during translation elongation. During this step, the ribosome changes from the pre-translocational (PRE) to the post-translocational (POST) state as the newly formed A-site-bound peptidyl-tRNA and P-site-bound deacylated tRNA move to the P and E sites, respectively. Catalyzes the coordinated movement of the two tRNA molecules, the mRNA and conformational changes in the ribosome. The sequence is that of Elongation factor 2 from Methanococcus maripaludis (strain DSM 14266 / JCM 13030 / NBRC 101832 / S2 / LL).